Consider the following 129-residue polypeptide: Large ribosomal subunit protein bL17 (129 aa).

This sequence belongs to the bacterial ribosomal protein bL17 family. Part of the 50S ribosomal subunit. Contacts protein L32.

The sequence is that of Large ribosomal subunit protein bL17 from Acidovorax ebreus (strain TPSY) (Diaphorobacter sp. (strain TPSY)).